Here is a 333-residue protein sequence, read N- to C-terminus: Flotillin-like protein FloA (333 aa).

The chain crosses the membrane as a helical span at residues isoleucine 9–phenylalanine 29.

It belongs to the flotillin-like FloA family. Homooligomerizes.

Its subcellular location is the cell membrane. It localises to the membrane raft. Found in functional membrane microdomains (FMM) that may be equivalent to eukaryotic membrane rafts. FMMs are highly dynamic and increase in number as cells age. Flotillins are thought to be important factors in membrane fluidity. In Bacteroides thetaiotaomicron (strain ATCC 29148 / DSM 2079 / JCM 5827 / CCUG 10774 / NCTC 10582 / VPI-5482 / E50), this protein is Flotillin-like protein FloA.